The sequence spans 100 residues: Small ribosomal subunit protein uS14c (100 aa).

Belongs to the universal ribosomal protein uS14 family. In terms of assembly, part of the 30S ribosomal subunit.

The protein localises to the plastid. It localises to the chloroplast. Binds 16S rRNA, required for the assembly of 30S particles. This is Small ribosomal subunit protein uS14c from Anthoceros angustus (Hornwort).